A 787-amino-acid chain; its full sequence is Phenylalanine--tRNA ligase beta subunit (787 aa).

The region spanning 39–149 (APAFSGVVVA…EDAPVGTNIR (111 aa)) is the tRNA-binding domain. The region spanning 400-475 (PEAKQVGLRL…RVYGYENIPD (76 aa)) is the B5 domain. Positions 453, 459, 462, and 463 each coordinate Mg(2+). Positions 694 to 786 (SKFQPVRRDL…VATEAGARLR (93 aa)) constitute an FDX-ACB domain.

This sequence belongs to the phenylalanyl-tRNA synthetase beta subunit family. Type 1 subfamily. In terms of assembly, tetramer of two alpha and two beta subunits. Mg(2+) is required as a cofactor.

The protein resides in the cytoplasm. The enzyme catalyses tRNA(Phe) + L-phenylalanine + ATP = L-phenylalanyl-tRNA(Phe) + AMP + diphosphate + H(+). This is Phenylalanine--tRNA ligase beta subunit from Neisseria gonorrhoeae (strain ATCC 700825 / FA 1090).